The following is a 238-amino-acid chain: Ribonuclease PH (238 aa).

Phosphate contacts are provided by residues R86 and 124–126; that span reads GTR.

It belongs to the RNase PH family. Homohexameric ring arranged as a trimer of dimers.

It carries out the reaction tRNA(n+1) + phosphate = tRNA(n) + a ribonucleoside 5'-diphosphate. Functionally, phosphorolytic 3'-5' exoribonuclease that plays an important role in tRNA 3'-end maturation. Removes nucleotide residues following the 3'-CCA terminus of tRNAs; can also add nucleotides to the ends of RNA molecules by using nucleoside diphosphates as substrates, but this may not be physiologically important. Probably plays a role in initiation of 16S rRNA degradation (leading to ribosome degradation) during starvation. In Sphingopyxis alaskensis (strain DSM 13593 / LMG 18877 / RB2256) (Sphingomonas alaskensis), this protein is Ribonuclease PH.